A 287-amino-acid polypeptide reads, in one-letter code: ATP synthase gamma chain (287 aa).

Belongs to the ATPase gamma chain family. F-type ATPases have 2 components, CF(1) - the catalytic core - and CF(0) - the membrane proton channel. CF(1) has five subunits: alpha(3), beta(3), gamma(1), delta(1), epsilon(1). CF(0) has three main subunits: a, b and c.

It localises to the cell inner membrane. Functionally, produces ATP from ADP in the presence of a proton gradient across the membrane. The gamma chain is believed to be important in regulating ATPase activity and the flow of protons through the CF(0) complex. This is ATP synthase gamma chain from Geotalea daltonii (strain DSM 22248 / JCM 15807 / FRC-32) (Geobacter daltonii).